Reading from the N-terminus, the 78-residue chain is Translational regulator CsrA (78 aa).

Belongs to the CsrA/RsmA family. As to quaternary structure, homodimer; the beta-strands of each monomer intercalate to form a hydrophobic core, while the alpha-helices form wings that extend away from the core.

The protein resides in the cytoplasm. In terms of biological role, a translational regulator that binds mRNA to regulate translation initiation and/or mRNA stability. Usually binds in the 5'-UTR at or near the Shine-Dalgarno sequence preventing ribosome-binding, thus repressing translation. Its main target seems to be the major flagellin gene, while its function is anatagonized by FliW. In Nitratidesulfovibrio vulgaris (strain ATCC 29579 / DSM 644 / CCUG 34227 / NCIMB 8303 / VKM B-1760 / Hildenborough) (Desulfovibrio vulgaris), this protein is Translational regulator CsrA.